We begin with the raw amino-acid sequence, 272 residues long: Indole-3-glycerol phosphate synthase (272 aa).

The protein belongs to the TrpC family.

It catalyses the reaction 1-(2-carboxyphenylamino)-1-deoxy-D-ribulose 5-phosphate + H(+) = (1S,2R)-1-C-(indol-3-yl)glycerol 3-phosphate + CO2 + H2O. Its pathway is amino-acid biosynthesis; L-tryptophan biosynthesis; L-tryptophan from chorismate: step 4/5. The protein is Indole-3-glycerol phosphate synthase of Mycolicibacterium gilvum (strain PYR-GCK) (Mycobacterium gilvum (strain PYR-GCK)).